The sequence spans 472 residues: 7-dimethylallyltryptophan synthase hasE (472 aa).

Glutamate 138 is an L-tryptophan binding site. Arginine 154, lysine 239, tyrosine 241, lysine 313, tyrosine 315, tyrosine 393, tyrosine 460, and tyrosine 464 together coordinate dimethylallyl diphosphate.

The protein belongs to the tryptophan dimethylallyltransferase family. As to quaternary structure, homodimer.

The catalysed reaction is L-tryptophan + dimethylallyl diphosphate = 7-(3-methylbut-2-enyl)-L-tryptophan + diphosphate. The enzyme catalyses an N-terminal L-tryptophanyl-L-alpha-aminoacyl-[peptide] + H2O = an N-terminal L-alpha-aminoacyl-[peptide] + L-tryptophan. It participates in secondary metabolite biosynthesis. Functionally, 7-dimethylallyltryptophan synthase; part of the gene cluster that mediates the biosynthesis of hexadehydro-astechrome (HAS), a tryptophan-derived iron(III)-complex that acts as a virulence factor in infected mice. Catalyzes the prenylation of L-tryptophan at the C-7 position of the indole moiety. The enzyme is specific for dimethylallyl diphosphate (DMAPP) as prenyl donor. Also accepts D-tryptophan, typtophan-derivatives with modifications at the side chain or the indole ring, and linear and cyclic dipeptides such as H-L-Trp-L-Gly-OH or cyclo-L-Trp-L-Gly as substrates, however with lower efficiency. Also has tryptophan aminopeptidase activity towards linear peptides with a tryptophanyl moiety at the N-terminus. Dipeptides are better substrates than peptides with 3 or more amino acids. Enzymatic rate constants however are much higher for the prenyltransferase activity than for the aminopeptidase activity. Within the hexadehydro-astechrome biosyntetic pathway, hasE catalyzes the prenylation of the hasD-tethered tryptophan or the resulting tethered Trp-Ala dipeptid. The HAS biosynthesis begins with the synthesis of a tethered Trp-Ala dipeptide by the NRPS hasD. The 7-dimethylallyltryptophan synthase hasE then catalyzes the prenylation of the hasD-tethered tryptophan or the resulting tethered Trp-Ala dipeptide at the C-7 position of the indole moiety. HAS biosynthesis continues via tethered intermediates with the succesive actions of the cytochrome P450 monooxygenase hasH, the O-methyltransferase hasC, and the FAD-linked oxidoreductase hasG. The resulting O-methylated diketopiperazine is then released from hasD. Finally, three O-methylated diketopiperazine molecules assemble in a trimeric complex with Fe(III) to produce hexadehydro-astechrome. The chain is 7-dimethylallyltryptophan synthase hasE from Aspergillus fumigatus (strain CBS 144.89 / FGSC A1163 / CEA10) (Neosartorya fumigata).